The sequence spans 339 residues: Methylthioribose-1-phosphate isomerase (339 aa).

Substrate contacts are provided by residues 50–52 (RGA), arginine 84, and glutamine 186. Aspartate 227 acts as the Proton donor in catalysis. 237 to 238 (NK) is a binding site for substrate.

The protein belongs to the eIF-2B alpha/beta/delta subunits family. MtnA subfamily.

The enzyme catalyses 5-(methylsulfanyl)-alpha-D-ribose 1-phosphate = 5-(methylsulfanyl)-D-ribulose 1-phosphate. It functions in the pathway amino-acid biosynthesis; L-methionine biosynthesis via salvage pathway; L-methionine from S-methyl-5-thio-alpha-D-ribose 1-phosphate: step 1/6. Catalyzes the interconversion of methylthioribose-1-phosphate (MTR-1-P) into methylthioribulose-1-phosphate (MTRu-1-P). The chain is Methylthioribose-1-phosphate isomerase from Sulfurihydrogenibium sp. (strain YO3AOP1).